The primary structure comprises 239 residues: Gamma-lactamase MBL2 (239 aa).

Residues histidine 56, histidine 58, aspartate 60, histidine 61, histidine 141, and aspartate 165 each contribute to the Zn(2+) site.

The protein belongs to the metallo-beta-lactamase superfamily.

Its function is as follows. Gamma-lactamase; part of the Fusarium detoxification of benzoxazolinone cluster 2 (FDB2) involved in the degradation of benzoxazolinones produced by the host plant. Maize, wheat, and rye produce the 2 benzoxazinone phytoanticipins 2,4-dihy-droxy-7-methoxy-1,4-benzoxazin-3-one (DIMBOA) and 2,4-dihydroxy-1,4-benzoxazin-3-one (DIBOA) that, due to their inherent instability once released, spontaneously degrade to the more stable corresponding benzoxazolinones, 6-methoxy-2-benzoxazolinone (MBOA) and 2-benzoxazolinone (BOA), respectively. The first step in the detoxification of benzoxazolinones involves the hydrolysis of the cyclic ester bond of benzoxazolinones by the FDB1 cluster gamma-lactamase MBL1 to aminophenols. MBL1 is able to convert BOA into 2-aminophenol (2-AP), as well as MBOA into 5-methoxy-2-aminophenol (2-AMP). The FDB2 cluster N-malonyltransferase FDB2/NAT1 then metabolizes aminophenols via N-malonylation to non-toxic malonamic acids. FDB2/NAT1 converts 2-AP into N-(2-hydroxyphenyl) malonamic acid (HPMA) and 2-AMP into N-(2-hydroxy-4-methoxyphenyl) malonamic acid (HMPMA). The duplicated dienlactone hydrolases DLH1 and DLH2 may provide redundant function for hydrolyzing the lactone moiety in the BOA molecule. The roles of the amidases and other enzymes encoded by the 2 FDB clusters have not been identified so far. The sequence is that of Gamma-lactamase MBL2 from Gibberella moniliformis (strain M3125 / FGSC 7600) (Maize ear and stalk rot fungus).